A 249-amino-acid polypeptide reads, in one-letter code: 2,3-bisphosphoglycerate-dependent phosphoglycerate mutase (249 aa).

Residues 9-16 (RHGQSQWN), 22-23 (TG), Arg-61, 88-91 (ERHY), Lys-99, 115-116 (RR), and 184-185 (GN) each bind substrate. Catalysis depends on His-10, which acts as the Tele-phosphohistidine intermediate. The active-site Proton donor/acceptor is Glu-88.

Belongs to the phosphoglycerate mutase family. BPG-dependent PGAM subfamily. In terms of assembly, homodimer.

The enzyme catalyses (2R)-2-phosphoglycerate = (2R)-3-phosphoglycerate. Its pathway is carbohydrate degradation; glycolysis; pyruvate from D-glyceraldehyde 3-phosphate: step 3/5. In terms of biological role, catalyzes the interconversion of 2-phosphoglycerate and 3-phosphoglycerate. The protein is 2,3-bisphosphoglycerate-dependent phosphoglycerate mutase of Xanthomonas campestris pv. campestris (strain B100).